Here is a 156-residue protein sequence, read N- to C-terminus: Probable cyclic pyranopterin monophosphate synthase (156 aa).

Substrate-binding positions include 73–75 (LCH) and 109–110 (ME). The active site involves D124.

It belongs to the MoaC family. In terms of assembly, homohexamer; trimer of dimers.

It catalyses the reaction (8S)-3',8-cyclo-7,8-dihydroguanosine 5'-triphosphate = cyclic pyranopterin phosphate + diphosphate. The protein operates within cofactor biosynthesis; molybdopterin biosynthesis. In terms of biological role, catalyzes the conversion of (8S)-3',8-cyclo-7,8-dihydroguanosine 5'-triphosphate to cyclic pyranopterin monophosphate (cPMP). This is Probable cyclic pyranopterin monophosphate synthase from Pyrococcus furiosus (strain ATCC 43587 / DSM 3638 / JCM 8422 / Vc1).